Reading from the N-terminus, the 345-residue chain is Ribonucleoside-diphosphate reductase small chain 2 (345 aa).

Methionine 1 is subject to N-acetylmethionine. Tyrosine 131 is a catalytic residue. Phosphoserine is present on residues serine 169 and serine 332. Threonine 334 carries the post-translational modification Phosphothreonine. The residue at position 336 (serine 336) is a Phosphoserine. Lysine 337 participates in a covalent cross-link: Glycyl lysine isopeptide (Lys-Gly) (interchain with G-Cter in ubiquitin).

Belongs to the ribonucleoside diphosphate reductase small chain family. In terms of assembly, heterotetramer of two large (R1) and two small (R2) subunits. S.cerevisiae has two different R1 subunits (RNR1 and RNR3) and two different R2 subunits (RNR2 and RNR4). The functional form of the small subunits is a RNR2-RNR4 heterodimer, where RNR2 provides the iron-radical center and RNR4 is required for proper folding of RNR2 and assembly with the large subunits. Under normal growth conditions, the active form of the large subunits is a homodimer of the constitutively expressed RNR1. In damaged cells or cells arrested for DNA synthesis, the reductase consists of multiple species because of the association of the small subunits (RNR2-RNR4) with either the RNR1 homodimer or a heterodimer of RNR1 and the damage-inducible RNR3. Interacts with DIF1.

It is found in the nucleus. The enzyme catalyses a 2'-deoxyribonucleoside 5'-diphosphate + [thioredoxin]-disulfide + H2O = a ribonucleoside 5'-diphosphate + [thioredoxin]-dithiol. Provides the precursors necessary for DNA synthesis. Catalyzes the biosynthesis of deoxyribonucleotides from the corresponding ribonucleotides. RNR4 is required for proper folding of RNR2 and assembly with the large subunits. The sequence is that of Ribonucleoside-diphosphate reductase small chain 2 (RNR4) from Saccharomyces cerevisiae (strain ATCC 204508 / S288c) (Baker's yeast).